We begin with the raw amino-acid sequence, 434 residues long: Ribosomal RNA-processing protein 14 (434 aa).

The residue at position 2 (Ser2) is an N-acetylserine. 3 stretches are compositionally biased toward basic and acidic residues: residues 32-58 (KSQEQWKAKKKTKEQSKNDKLKKLDPE), 70-79 (VMKKKEKDAK), and 95-105 (KQKEATSKVEG). The tract at residues 32-257 (KSQEQWKAKK…RFKKGKKDSE (226 aa)) is disordered. The segment covering 121–140 (PDEDEEEEEDIKVIFDDEGN) has biased composition (acidic residues). Residues 144-178 (LESKKDTTEPDRSVEKKSITEEEKLQRKKNLEALR) are compositionally biased toward basic and acidic residues. Coiled-coil stretches lie at residues 162–230 (ITEE…EIAS) and 293–360 (AKND…QKRK). A compositionally biased stretch (acidic residues) spans 220–241 (EQEQDQDEIASDSDMEDIDSDL). Residues 375-392 (TISERQKRREENLRIRKD) show a composition bias toward basic and acidic residues. Residues 375–434 (TISERQKRREENLRIRKDNKGKKRNKQEKMKRKYVGSAVPKKRAGFEGRLKTGKKKGGPK) form a disordered region. Basic residues-rich tracts occupy residues 393 to 408 (NKGKKRNKQEKMKRKY) and 425 to 434 (KTGKKKGGPK).

This sequence belongs to the SURF6 family. Component of the 90S and 60S pre-ribosomal particles.

The protein resides in the nucleus. Its subcellular location is the nucleolus. Functionally, involved in ribosome biogenesis and cell polarity. Required for the synthesis of both 40S and 60S ribosomal subunits and may also play some direct role in correct positioning of the mitotic spindle during mitosis. In Saccharomyces cerevisiae (strain ATCC 204508 / S288c) (Baker's yeast), this protein is Ribosomal RNA-processing protein 14 (RRP14).